A 690-amino-acid chain; its full sequence is Methionine--tRNA ligase (690 aa).

The short motif at 13–23 is the 'HIGH' region element; sequence PYANGQIHIGH. Zn(2+) is bound by residues cysteine 144, cysteine 147, cysteine 157, and cysteine 160. The short motif at 335–339 is the 'KMSKS' region element; sequence KMSKS. An ATP-binding site is contributed by lysine 338. The region spanning 584–690 is the tRNA-binding domain; that stretch reads DFAKIDLRVA…SGAVPGMRIR (107 aa).

This sequence belongs to the class-I aminoacyl-tRNA synthetase family. MetG type 1 subfamily. Homodimer. Requires Zn(2+) as cofactor.

The protein resides in the cytoplasm. It catalyses the reaction tRNA(Met) + L-methionine + ATP = L-methionyl-tRNA(Met) + AMP + diphosphate. In terms of biological role, is required not only for elongation of protein synthesis but also for the initiation of all mRNA translation through initiator tRNA(fMet) aminoacylation. The protein is Methionine--tRNA ligase of Cupriavidus metallidurans (strain ATCC 43123 / DSM 2839 / NBRC 102507 / CH34) (Ralstonia metallidurans).